Reading from the N-terminus, the 86-residue chain is MGRTTKVGSAGRFGPRYGLKIRRRVAAVEAKMKQKHICPVCGRKAVRRISTGIWQCQKCGATFAGGAYLPVTPAGKVAKRVTASKA.

A C4-type zinc finger spans residues 38–59 (CPVCGRKAVRRISTGIWQCQKC).

Belongs to the eukaryotic ribosomal protein eL43 family. Requires Zn(2+) as cofactor.

In Thermococcus onnurineus (strain NA1), this protein is Large ribosomal subunit protein eL43.